Consider the following 179-residue polypeptide: Large ribosomal subunit protein uL5 (179 aa).

This sequence belongs to the universal ribosomal protein uL5 family. As to quaternary structure, part of the 50S ribosomal subunit; part of the 5S rRNA/L5/L18/L25 subcomplex. Contacts the 5S rRNA and the P site tRNA. Forms a bridge to the 30S subunit in the 70S ribosome.

This is one of the proteins that bind and probably mediate the attachment of the 5S RNA into the large ribosomal subunit, where it forms part of the central protuberance. In the 70S ribosome it contacts protein S13 of the 30S subunit (bridge B1b), connecting the 2 subunits; this bridge is implicated in subunit movement. Contacts the P site tRNA; the 5S rRNA and some of its associated proteins might help stabilize positioning of ribosome-bound tRNAs. The sequence is that of Large ribosomal subunit protein uL5 from Citrifermentans bemidjiense (strain ATCC BAA-1014 / DSM 16622 / JCM 12645 / Bem) (Geobacter bemidjiensis).